Reading from the N-terminus, the 78-residue chain is Xibalbin-13 1 (78 aa).

A signal peptide spans 1-27; it reads MKEANTRRYIHLCLVVVLVSTIITTEA. The propeptide occupies 28-31; it reads EDDR. 4 cysteine pairs are disulfide-bonded: cysteine 34–cysteine 49, cysteine 41–cysteine 54, cysteine 48–cysteine 65, and cysteine 56–cysteine 63. At serine 76 the chain carries Serine amide.

The protein belongs to the xibalbin-13 family. Expressed by the venom gland.

The protein resides in the secreted. In terms of biological role, probable neurotoxin. Strongly inhibits voltage-gated potassium channels (Kv1.1/KCNA1, Kv1.2/KCNA2, Kv1.3/KCNA3, and Kv1.6/KCNA6) and mildly inhibits sodium channels (Nav1.2/SCN2A, Nav1.4/SCN4A, Nav1.5/SCN5A, Nav1.6/SCN8A, and BgNav). Induces activation of protein kinase A type II (PKA-II) and MAP kinase Erk1/2 in primary nociceptive and non-nociceptive sensory neurons. Does not show cytotoxic activity. Does not have an impact on Ca2+, cAMP, and NO signaling in the cell types analyzed. Does not interfere with the adhesion of leukocytes to endothelial cells. In Xibalbanus tulumensis (Blind cave remipede), this protein is Xibalbin-13 1.